We begin with the raw amino-acid sequence, 144 residues long: 3-dehydroquinate dehydratase (144 aa).

Residue Y23 is the Proton acceptor of the active site. Substrate-binding residues include N74, H80, and D87. H100 serves as the catalytic Proton donor. Substrate contacts are provided by residues L101–S102 and R111.

This sequence belongs to the type-II 3-dehydroquinase family. In terms of assembly, homododecamer.

It catalyses the reaction 3-dehydroquinate = 3-dehydroshikimate + H2O. The protein operates within metabolic intermediate biosynthesis; chorismate biosynthesis; chorismate from D-erythrose 4-phosphate and phosphoenolpyruvate: step 3/7. In terms of biological role, catalyzes a trans-dehydration via an enolate intermediate. The chain is 3-dehydroquinate dehydratase from Hydrogenovibrio crunogenus (strain DSM 25203 / XCL-2) (Thiomicrospira crunogena).